We begin with the raw amino-acid sequence, 142 residues long: Histone H2B (142 aa).

Basic and acidic residues predominate over residues 1-10; sequence MPPKPAEKKP. The tract at residues 1–50 is disordered; sequence MPPKPAEKKPSSTAGKAPASSAGKAPAEAAKKTSKAPAKSGEKKKATKVR. Residues Lys-8 and Lys-9 each carry the N6-acetyllysine; alternate modification. Residues Lys-8 and Lys-9 each participate in a glycyl lysine isopeptide (Lys-Gly) (interchain with G-Cter in SUMO); alternate cross-link. The segment covering 11–28 has biased composition (low complexity); sequence SSTAGKAPASSAGKAPAE. At Lys-24 the chain carries N6-acetyllysine. The segment covering 40-50 has biased composition (basic and acidic residues); that stretch reads SGEKKKATKVR. Lys-137 is covalently cross-linked (Glycyl lysine isopeptide (Lys-Gly) (interchain with G-Cter in ubiquitin)).

It belongs to the histone H2B family. As to quaternary structure, the nucleosome is a histone octamer containing two molecules each of H2A, H2B, H3 and H4 assembled in one H3-H4 heterotetramer and two H2A-H2B heterodimers. The octamer wraps approximately 147 bp of DNA. Post-translationally, monoubiquitinated by the UBC2-BRE1 complex to form H2BK123ub1. H2BK123ub1 gives a specific tag for epigenetic transcriptional activation and is also prerequisite for H3K4me and H3K79me formation. H2BK123ub1 also modulates the formation of double-strand breaks during meiosis and is a prerequisite for DNA-damage checkpoint activation. Acetylation of N-terminal lysines and particularly formation of H2BK11ac has a positive effect on transcription. In terms of processing, sumoylation to form H2BK6su or H2BK7su occurs preferentially near the telomeres and represses gene transcription.

It is found in the nucleus. The protein resides in the chromosome. Its function is as follows. Core component of nucleosome. Nucleosomes wrap and compact DNA into chromatin, limiting DNA accessibility to the cellular machineries which require DNA as a template. Histones thereby play a central role in transcription regulation, DNA repair, DNA replication and chromosomal stability. DNA accessibility is regulated via a complex set of post-translational modifications of histones, also called histone code, and nucleosome remodeling. This chain is Histone H2B (HTB1), found in Mycosarcoma maydis (Corn smut fungus).